Here is a 342-residue protein sequence, read N- to C-terminus: Anthranilate phosphoribosyltransferase (342 aa).

Residues G79, 82 to 83 (GD), T87, 89 to 92 (NVST), 107 to 115 (KHGNRSVSS), and S119 contribute to the 5-phospho-alpha-D-ribose 1-diphosphate site. G79 serves as a coordination point for anthranilate. S91 lines the Mg(2+) pocket. N110 provides a ligand contact to anthranilate. R165 is an anthranilate binding site. D223 and E224 together coordinate Mg(2+).

It belongs to the anthranilate phosphoribosyltransferase family. In terms of assembly, homodimer. Requires Mg(2+) as cofactor.

It carries out the reaction N-(5-phospho-beta-D-ribosyl)anthranilate + diphosphate = 5-phospho-alpha-D-ribose 1-diphosphate + anthranilate. The protein operates within amino-acid biosynthesis; L-tryptophan biosynthesis; L-tryptophan from chorismate: step 2/5. Its function is as follows. Catalyzes the transfer of the phosphoribosyl group of 5-phosphorylribose-1-pyrophosphate (PRPP) to anthranilate to yield N-(5'-phosphoribosyl)-anthranilate (PRA). The chain is Anthranilate phosphoribosyltransferase from Aeromonas hydrophila subsp. hydrophila (strain ATCC 7966 / DSM 30187 / BCRC 13018 / CCUG 14551 / JCM 1027 / KCTC 2358 / NCIMB 9240 / NCTC 8049).